The primary structure comprises 227 residues: Guanylate kinase (227 aa).

A Guanylate kinase-like domain is found at 21–199 (GNLFMVVAPS…ALAELECIVA (179 aa)). 28–35 (APSGAGKS) is a binding site for ATP.

The protein belongs to the guanylate kinase family.

The protein localises to the cytoplasm. It carries out the reaction GMP + ATP = GDP + ADP. Its function is as follows. Essential for recycling GMP and indirectly, cGMP. The protein is Guanylate kinase of Burkholderia orbicola (strain AU 1054).